We begin with the raw amino-acid sequence, 1066 residues long: DNA primase (1066 aa).

A disordered region spans residues 694-727; it reads DGPSAGGDDGDGDWFPDAGGPGDEEWEEDTDPMD. The span at 715 to 725 shows a compositional bias: acidic residues; the sequence is GDEEWEEDTDP. The CHC2-type zinc-finger motif lies at 995 to 1035; it reads CLRFKHGRASRATARTFLALSVGTNNRLCASLCQQCFATKC.

Belongs to the herpesviridae DNA primase family. In terms of assembly, associates with the helicase and the primase-associated factor to form the helicase-primase factor.

It is found in the host nucleus. Essential component of the helicase/primase complex. Unwinds the DNA at the replication forks and generates single-stranded DNA for both leading and lagging strand synthesis. The primase initiates primer synthesis and thereby produces large amount of short RNA primers on the lagging strand that the polymerase elongates using dNTPs. In Human herpesvirus 2 (strain HG52) (HHV-2), this protein is DNA primase.